We begin with the raw amino-acid sequence, 825 residues long: MHTDTLEHDALARAGAHARIQAACAQACSAIAPAWPLDRAIAVNPHWQRTGQPLRRVAARMALLGGIQVFPPRERQREAWQGGRITPQDLALALQRLPDAAGLAEADCVAALDRPGGLQPLPLLIDVLDNDPARDTRLTWRQAITHQVSQTCAAFFDRAQADWQPERGPGLYAFWRDTLTHDHGIGTLMGLPGLHRGVQALPATREDAEAWAMHHLQLQGGAWADYLEAVLLTVNGWASWCAYLAWQAPEGAPEREHLRDLLAIRLAWGAVLLECKDDAAARQAFAALQAEWRRAPERLQQAEQALVVDEVWQLALELGYQRELAGRLVRAPGLPSAVPEAQAVFCIDVRSEPLRRALEATAPTLQTLGFAGFFGVPAAYTPLGTAARRPQLPGLLPPAMEVTDQLPDPGAAVTARHRRLAWAAQWESTTRWPGAAFSFVEALGAGYLGKLGGWLWPREQARDSGDHAGLPARYRPVCRPMLSGLSLEERAALAARVLKALGLARGAAPLVMLVGHGSQSANNAQAAALDCGACCGQTGEVNARALALLLNDAEVRTALPALGIALPEATCFVAALHNTTTDEIEGFDLDLLPPEARARWERWQPVFSAAGDRVRRERAPSLGLDARAAAGDLLSALRRRANDGAQTRPEWGLAGNAAFVIAPRSRTRDAELGGRAFLHDYDPAQDTDGSLLELLMTAPMLVTHWINWQYHASTCDPERLGSGNKLLHNVVGGHIGVFEGNGGDLRIGLSRQSLHDGQRWVHEPLRLTVVIDAPAAAIEAVIGKHSVLQQLLDHGWLHLWRFGDAGLERREGGRWFAQDAGASGA.

Residues Cys-346, Asp-348, His-516, and Cys-531 each coordinate Zn(2+).

It belongs to the inorganic carbon transporter (TC 9.A.2) DabA family. As to quaternary structure, forms a complex with DabB. Zn(2+) serves as cofactor.

Its subcellular location is the cell inner membrane. Functionally, part of an energy-coupled inorganic carbon pump. The polypeptide is Probable inorganic carbon transporter subunit DabA (Paracidovorax citrulli (strain AAC00-1) (Acidovorax citrulli)).